The chain runs to 464 residues: E3 ubiquitin-protein ligase RNF38 (464 aa).

The interval methionine 1 to histidine 94 is disordered. A Bipartite nuclear localization signal 1 motif is present at residues aspartate 6–phenylalanine 20. Positions methionine 38–histidine 53 are enriched in polar residues. Positions arginine 64–glutamate 79 match the Bipartite nuclear localization signal 2 motif. Residues arginine 64–arginine 83 show a composition bias toward basic residues. An RING-type zinc finger spans residues cysteine 412–arginine 453.

Its subcellular location is the nucleus. The enzyme catalyses S-ubiquitinyl-[E2 ubiquitin-conjugating enzyme]-L-cysteine + [acceptor protein]-L-lysine = [E2 ubiquitin-conjugating enzyme]-L-cysteine + N(6)-ubiquitinyl-[acceptor protein]-L-lysine.. It participates in protein modification; protein ubiquitination. In terms of biological role, acts as an E3 ubiquitin-protein ligase able to ubiquitinate p53/TP53 which promotes its relocalization to discrete foci associated with PML nuclear bodies. Exhibits preference for UBE2D2 as a E2 enzyme. The sequence is that of E3 ubiquitin-protein ligase RNF38 from Mus musculus (Mouse).